The primary structure comprises 1946 residues: Integrin beta-like protein E (1946 aa).

The first 22 residues, 1–22 (MNNLFKFLFVLLAIFCPPISDL), serve as a signal peptide directing secretion. Residues 23–1875 (VVSHGVPQQH…ATTQTTNNKT (1853 aa)) are Extracellular-facing. Residues asparagine 107, asparagine 134, and asparagine 203 are each glycosylated (N-linked (GlcNAc...) asparagine). The region spanning 423-460 (YGQNCDPTPPCDKGIPNEGILGDGKCMCINGYSGDKCD) is the EGF-like domain. 2 cysteine pairs are disulfide-bonded: cysteine 433–cysteine 448 and cysteine 450–cysteine 459. Residues 514–699 (DVFVLVDVNV…AGLKSVLSNV (186 aa)) form the VWFA domain. 18 N-linked (GlcNAc...) asparagine glycosylation sites follow: asparagine 705, asparagine 860, asparagine 1043, asparagine 1113, asparagine 1177, asparagine 1374, asparagine 1401, asparagine 1513, asparagine 1611, asparagine 1620, asparagine 1662, asparagine 1671, asparagine 1737, asparagine 1743, asparagine 1762, asparagine 1812, asparagine 1852, and asparagine 1873. Residues 1876-1896 (VLTGAIAGAAAGTALIAAAAW) form a helical membrane-spanning segment. Over 1897-1946 (KLLRKAAPPTDTFFSEAAFLGDGVNANPLYEQSASAAENPLYQSASDNTD) the chain is Cytoplasmic.

This sequence belongs to the SIB family. In terms of assembly, interacts with talA/talin.

Its subcellular location is the membrane. Implicated in cellular adhesion. The chain is Integrin beta-like protein E (sibE) from Dictyostelium discoideum (Social amoeba).